A 244-amino-acid polypeptide reads, in one-letter code: U11/U12 small nuclear ribonucleoprotein 35 kDa protein (244 aa).

Positions 51-129 (LTLFVARLNL…HEIFVDYELE (79 aa)) constitute an RRM domain. Positions 146–162 (GKKESGQLRFGGRDRPF) are enriched in basic and acidic residues. The interval 146–244 (GKKESGQLRF…KSRDKRDRSK (99 aa)) is disordered. K172 participates in a covalent cross-link: Glycyl lysine isopeptide (Lys-Gly) (interchain with G-Cter in SUMO2). Composition is skewed to basic and acidic residues over residues 173-185 (NEPH…ERRE) and 192-244 (RHWD…DRSK).

As to quaternary structure, component of the U11/U12 snRNPs that are part of the U12-type spliceosome.

It is found in the nucleus. The sequence is that of U11/U12 small nuclear ribonucleoprotein 35 kDa protein (Snrnp35) from Mus musculus (Mouse).